The chain runs to 374 residues: Aminomethyltransferase (374 aa).

This sequence belongs to the GcvT family. The glycine cleavage system is composed of four proteins: P, T, L and H.

It catalyses the reaction N(6)-[(R)-S(8)-aminomethyldihydrolipoyl]-L-lysyl-[protein] + (6S)-5,6,7,8-tetrahydrofolate = N(6)-[(R)-dihydrolipoyl]-L-lysyl-[protein] + (6R)-5,10-methylene-5,6,7,8-tetrahydrofolate + NH4(+). In terms of biological role, the glycine cleavage system catalyzes the degradation of glycine. This is Aminomethyltransferase from Prochlorococcus marinus (strain MIT 9303).